The following is a 66-amino-acid chain: Alpha-bisabolene synthase (66 aa).

The protein belongs to the terpene synthase family. Tpsd subfamily. It depends on Mn(2+) as a cofactor. K(+) serves as cofactor.

The protein localises to the cytoplasm. It carries out the reaction (2E,6E)-farnesyl diphosphate = (E,R)-alpha-bisabolene + diphosphate. The protein operates within terpene metabolism; oleoresin biosynthesis. In terms of biological role, involved in defensive oleoresin formation in conifers in response to insect attack or other injury. Involved in sesquiterpene (C15) olefins biosynthesis. This chain is Alpha-bisabolene synthase, found in Pseudotsuga menziesii (Douglas-fir).